A 138-amino-acid chain; its full sequence is uncharacterized protein (138 aa).

Residues 19–40 (ECKVSVISFFLLAFLLMAHIWL) form a helical membrane-spanning segment. Repeat copies occupy residues 94–106 (KGEIEGKEEKKEG), 107–119 (KGEIEGKEEKKEG), and 120–132 (KGEIEGKEEKKEV). A 3 X 13 AA tandem repeats of K-G-E-I-E-G-K-E-E-K-K-E-[GV] region spans residues 94–132 (KGEIEGKEEKKEGKGEIEGKEEKKEGKGEIEGKEEKKEV). Residues 98 to 138 (EGKEEKKEGKGEIEGKEEKKEGKGEIEGKEEKKEVENGPRK) form a disordered region.

In terms of tissue distribution, expressed in roots, leaves and flowers.

The protein localises to the mitochondrion membrane. Functionally, involved in cytoplasmic male sterility (CMS) by leading to pollen abortion. Not expressed in fertile (normal) plants. This is an uncharacterized protein from Raphanus sativus (Radish).